We begin with the raw amino-acid sequence, 274 residues long: Bis(5'-nucleosyl)-tetraphosphatase, symmetrical (274 aa).

This sequence belongs to the Ap4A hydrolase family.

The enzyme catalyses P(1),P(4)-bis(5'-adenosyl) tetraphosphate + H2O = 2 ADP + 2 H(+). Functionally, hydrolyzes diadenosine 5',5'''-P1,P4-tetraphosphate to yield ADP. This chain is Bis(5'-nucleosyl)-tetraphosphatase, symmetrical, found in Shewanella sp. (strain W3-18-1).